The primary structure comprises 139 residues: Large ribosomal subunit protein uL13 (139 aa).

This sequence belongs to the universal ribosomal protein uL13 family. In terms of assembly, part of the 50S ribosomal subunit.

This protein is one of the early assembly proteins of the 50S ribosomal subunit, although it is not seen to bind rRNA by itself. It is important during the early stages of 50S assembly. The polypeptide is Large ribosomal subunit protein uL13 (Aliarcobacter butzleri (strain RM4018) (Arcobacter butzleri)).